The primary structure comprises 442 residues: Phosphoglucosamine mutase (442 aa).

The Phosphoserine intermediate role is filled by Ser103. Positions 103, 241, 243, and 245 each coordinate Mg(2+). Phosphoserine is present on Ser103.

This sequence belongs to the phosphohexose mutase family. Mg(2+) is required as a cofactor. Post-translationally, activated by phosphorylation.

The catalysed reaction is alpha-D-glucosamine 1-phosphate = D-glucosamine 6-phosphate. Its function is as follows. Catalyzes the conversion of glucosamine-6-phosphate to glucosamine-1-phosphate. In Deinococcus deserti (strain DSM 17065 / CIP 109153 / LMG 22923 / VCD115), this protein is Phosphoglucosamine mutase.